We begin with the raw amino-acid sequence, 410 residues long: Dipeptidase ataJ (410 aa).

The Zn(2+) site is built by H27, D29, and E138. Substrate is bound at residue H165. A disordered region spans residues 180-200; that stretch reads TSSPWSEYGGQTHDPGDEPSR. The substrate site is built by R258 and D318.

Belongs to the metallo-dependent hydrolases superfamily. Peptidase M19 family. Requires Zn(2+) as cofactor.

It catalyses the reaction an L-aminoacyl-L-amino acid + H2O = 2 an L-alpha-amino acid. The protein operates within mycotoxin biosynthesis. Functionally, dipeptidase; part of the gene cluster that mediates the biosynthesis of acetylaranotin, a member of the epipolythiodioxopiperazine (ETP) class of toxins characterized by a disulfide-bridged cyclic dipeptide. The first step of acetylaranotin biosynthesis is performed by the NRPS ataP which produces diketopiperazine cyclo-L-Phe-L-Phe via the condensation of 2 phenylalanines (L-Phe). The ataC domain of ataTC then catalyzes the formation of bishydroxylation of cyclo-L-Phe-L-Phe. The glutathione S-transferase domain ataG in ataIMG further catalyzes the conjugation of two glutathiones to the bishydroxylated intermediate. Next, the dipeptidase ataJ removes the Glu residues. The following step is performed by the carbon sulfur lyase domain ataI of ataIMG which may convert the bis-cysteinyl adduct to yield an epidithiol intermediate. The ataT domain from ataTC then catalyzes the oxidation of the free dithiols, followed by a cyclization step catalyzed by the cytochrome P450 ataF. AtaF probably acts as an epoxidase to promote a dual epoxidation formation at C8 and C9 along with C8' and C9', followed by the spontaneous nucleophilic attack of the amide nitrogens N10 and N10' to yield an intermediate with the pyrrolidine partial structure. The final steps of acetylaranotin biosynthesis involve the acetylation and ring rearrangement of an epitetrathiodiketopiperazine intermediate to produce acetylaranotin. AtaH probably catalyzes the acetylation of epitetrathiodiketopiperazine to produce a diacetate and ataY is responsible for the formation of the dihydrooxepin moiety that converts the diacetate intermediate to acetylaranotin via acetylapoaranotin. Both enzymes could function independently in the absence of the other. The acetylaranotin bis-thiomethyltransferase ataS located outside of acetylaranotin gene cluster is the main thiomethyltransferase responsible for converting acetylaranotin and its related intermediates to their methylated forms. The protein is Dipeptidase ataJ of Aspergillus terreus (strain NIH 2624 / FGSC A1156).